The chain runs to 308 residues: MKKKFIALFSVLLLTSSLFLSSCSLPGLGGSSKDTIRIGAMATTESQIVSNILKELIEHDTGLKVEIVNNLGSTIVQHQAMLNGDVDITATRYTGTDLVGPLGEEAIKDPEKALAAVKKGFEERFHQTWFDSYGFANTYVFMVRQDTAKKYNLNTVSDMRKVENELTAGVDNSWMEREGDGYKAFSKAYDIEFKKIFPMQIGLIYTALKNNQMDVALGYSTDGRIPTYNLKLLKDDKKFFPPYDASALATDEILKKHPELKTTINKLKGKISTEEMQKLNYEADGKLKEPSIVAQEFLQKNNYFEGKN.

A signal peptide spans 1–22 (MKKKFIALFSVLLLTSSLFLSS). Cys-23 carries the N-palmitoyl cysteine lipid modification. A lipid anchor (S-diacylglycerol cysteine) is attached at Cys-23.

This sequence belongs to the OsmX family. As to quaternary structure, the complex is composed of two ATP-binding proteins (OpuCA), two transmembrane proteins (OpuCB and OpuCD) and a solute-binding protein (OpuCC).

It is found in the cell membrane. Functionally, part of the ABC transporter complex OpuCABCD involved in carnitine uptake. Involved, with BetL and GbuABC, in osmoprotection and cryoprotection of Listeria. Can also mediate weak glycine betaine transport. In Listeria monocytogenes serotype 1/2a (strain 10403S), this protein is Carnitine transport binding protein OpuCC (opuCC).